A 608-amino-acid chain; its full sequence is Tectonic-3 (608 aa).

A signal peptide spans 1–22 (MRTPQLALLQVFLLMFPDGVRP). The interval 23–58 (QPSSSPSGAVPTSLDLQPGTVGGTLQSSSEATATRP) is disordered. Over 23 to 586 (QPSSSPSGAV…AFSRGVSSQK (564 aa)) the chain is Extracellular. Positions 45-54 (GTLQSSSEAT) are enriched in polar residues. 3 N-linked (GlcNAc...) asparagine glycosylation sites follow: asparagine 78, asparagine 179, and asparagine 347. The chain crosses the membrane as a helical span at residues 587–607 (CSVSPVLILCLLLLGVLNLET). Position 608 (threonine 608) is a topological domain, cytoplasmic.

The protein belongs to the tectonic family. Part of the tectonic-like complex (also named B9 complex).

It is found in the membrane. Part of the tectonic-like complex which is required for tissue-specific ciliogenesis and may regulate ciliary membrane composition. May be involved in apoptosis regulation. Necessary for signal transduction through the sonic hedgehog (Shh) signaling pathway. The protein is Tectonic-3 (TCTN3) of Macaca fascicularis (Crab-eating macaque).